A 299-amino-acid polypeptide reads, in one-letter code: Nucleotide-binding protein AFE_3021 (299 aa).

G11–S18 lines the ATP pocket. D62–N65 is a binding site for GTP.

Belongs to the RapZ-like family.

Displays ATPase and GTPase activities. This Acidithiobacillus ferrooxidans (strain ATCC 23270 / DSM 14882 / CIP 104768 / NCIMB 8455) (Ferrobacillus ferrooxidans (strain ATCC 23270)) protein is Nucleotide-binding protein AFE_3021.